A 213-amino-acid polypeptide reads, in one-letter code: Large ribosomal subunit protein uL3 (213 aa).

The tract at residues 131-155 (GRASHGNSVSHRAHGSTGNNQDPGR) is disordered. A compositionally biased stretch (polar residues) spans 135–152 (HGNSVSHRAHGSTGNNQD). Gln-151 carries the N5-methylglutamine modification.

The protein belongs to the universal ribosomal protein uL3 family. As to quaternary structure, part of the 50S ribosomal subunit. Forms a cluster with proteins L14 and L19. In terms of processing, methylated by PrmB.

Functionally, one of the primary rRNA binding proteins, it binds directly near the 3'-end of the 23S rRNA, where it nucleates assembly of the 50S subunit. The chain is Large ribosomal subunit protein uL3 from Agrobacterium fabrum (strain C58 / ATCC 33970) (Agrobacterium tumefaciens (strain C58)).